The chain runs to 124 residues: Ribonuclease pancreatic (124 aa).

The span at 1-15 (KESPAKKFQRQHMDP) shows a compositional bias: basic and acidic residues. The tract at residues 1–24 (KESPAKKFQRQHMDPDSSSSNSSN) is disordered. The substrate site is built by Lys7 and Arg10. His12 acts as the Proton acceptor in catalysis. Residues Asn21 and Asn34 are each glycosylated (N-linked (GlcNAc...) asparagine). Disulfide bonds link Cys26-Cys84, Cys40-Cys95, Cys58-Cys110, and Cys65-Cys72. Substrate contacts are provided by residues 41-45 (KPVNT) and Lys66. An N-linked (GlcNAc...) asparagine glycan is attached at Asn76. Residue Arg85 coordinates substrate. His119 serves as the catalytic Proton donor.

It belongs to the pancreatic ribonuclease family. In terms of assembly, monomer. Interacts with and forms tight 1:1 complexes with RNH1. Dimerization of two such complexes may occur. Interaction with RNH1 inhibits this protein. Pancreas.

Its subcellular location is the secreted. The catalysed reaction is an [RNA] containing cytidine + H2O = an [RNA]-3'-cytidine-3'-phosphate + a 5'-hydroxy-ribonucleotide-3'-[RNA].. It catalyses the reaction an [RNA] containing uridine + H2O = an [RNA]-3'-uridine-3'-phosphate + a 5'-hydroxy-ribonucleotide-3'-[RNA].. In terms of biological role, endonuclease that catalyzes the cleavage of RNA on the 3' side of pyrimidine nucleotides. Acts on single-stranded and double-stranded RNA. The chain is Ribonuclease pancreatic (RNASE1) from Sus scrofa (Pig).